A 188-amino-acid chain; its full sequence is Cell division protein ZapC (188 aa).

It belongs to the ZapC family. In terms of assembly, interacts directly with FtsZ.

The protein resides in the cytoplasm. Functionally, contributes to the efficiency of the cell division process by stabilizing the polymeric form of the cell division protein FtsZ. Acts by promoting interactions between FtsZ protofilaments and suppressing the GTPase activity of FtsZ. This is Cell division protein ZapC from Psychromonas ingrahamii (strain DSM 17664 / CCUG 51855 / 37).